The primary structure comprises 365 residues: Histidinol-phosphate aminotransferase (365 aa).

The segment at 1 to 22 is disordered; the sequence is MSRPVPNPGILDIAPYTPGKSP. Residue lysine 221 is modified to N6-(pyridoxal phosphate)lysine.

Belongs to the class-II pyridoxal-phosphate-dependent aminotransferase family. Histidinol-phosphate aminotransferase subfamily. As to quaternary structure, homodimer. Pyridoxal 5'-phosphate is required as a cofactor.

It catalyses the reaction L-histidinol phosphate + 2-oxoglutarate = 3-(imidazol-4-yl)-2-oxopropyl phosphate + L-glutamate. It functions in the pathway amino-acid biosynthesis; L-histidine biosynthesis; L-histidine from 5-phospho-alpha-D-ribose 1-diphosphate: step 7/9. The polypeptide is Histidinol-phosphate aminotransferase (Rhodopseudomonas palustris (strain BisA53)).